The sequence spans 274 residues: Rhamnulose-1-phosphate aldolase (274 aa).

The active site involves Glu117. Zn(2+)-binding residues include His141, His143, and His212.

This sequence belongs to the aldolase class II family. RhaD subfamily. In terms of assembly, homotetramer. It depends on Zn(2+) as a cofactor.

It localises to the cytoplasm. It carries out the reaction L-rhamnulose 1-phosphate = (S)-lactaldehyde + dihydroxyacetone phosphate. Its pathway is carbohydrate degradation; L-rhamnose degradation; glycerone phosphate from L-rhamnose: step 3/3. Catalyzes the reversible cleavage of L-rhamnulose-1-phosphate to dihydroxyacetone phosphate (DHAP) and L-lactaldehyde. The polypeptide is Rhamnulose-1-phosphate aldolase (Escherichia coli (strain K12 / MC4100 / BW2952)).